Here is a 139-residue protein sequence, read N- to C-terminus: Self-incompatibility protein S1 (139 aa).

An N-terminal signal peptide occupies residues 1–19 (MNIFYVIVLLSFFLSKSSG). Asn51 carries N-linked (GlcNAc...) asparagine glycosylation.

This sequence belongs to the plant self-incompatibility (S1) protein family. In terms of processing, glycosylated (S1b) and unglocosylated (S1a) forms coexist. As to expression, accumulates in the stigma (at protein level).

Its subcellular location is the secreted. Functionally, exhibits specific pollen self-inhibitory activity thus preventing self-fertilization. This is Self-incompatibility protein S1 from Papaver rhoeas (Common poppy).